We begin with the raw amino-acid sequence, 290 residues long: Undecaprenyl-diphosphatase (290 aa).

8 helical membrane passes run 1–21 (MALW…FLPV), 49–69 (MILF…VVFW), 101–121 (LFWL…TLKA), 126–146 (VFAS…LLWW), 160–180 (INLK…MPGL), 203–223 (YSFF…AIEV), 232–252 (VGFS…IISL), and 266–286 (VFSF…IDLA).

It belongs to the UppP family.

The protein localises to the cell inner membrane. It carries out the reaction di-trans,octa-cis-undecaprenyl diphosphate + H2O = di-trans,octa-cis-undecaprenyl phosphate + phosphate + H(+). Functionally, catalyzes the dephosphorylation of undecaprenyl diphosphate (UPP). Confers resistance to bacitracin. The protein is Undecaprenyl-diphosphatase of Alkalilimnicola ehrlichii (strain ATCC BAA-1101 / DSM 17681 / MLHE-1).